Reading from the N-terminus, the 25-residue chain is Chaperonin GroEL (25 aa).

Belongs to the chaperonin (HSP60) family. Forms a cylinder of 14 subunits composed of two heptameric rings stacked back-to-back. Interacts with the co-chaperonin GroES.

The protein localises to the cytoplasm. The catalysed reaction is ATP + H2O + a folded polypeptide = ADP + phosphate + an unfolded polypeptide.. Functionally, together with its co-chaperonin GroES, plays an essential role in assisting protein folding. The GroEL-GroES system forms a nano-cage that allows encapsulation of the non-native substrate proteins and provides a physical environment optimized to promote and accelerate protein folding. The chain is Chaperonin GroEL from Delftia acidovorans (Pseudomonas acidovorans).